The following is a 159-amino-acid chain: Ribosomal RNA large subunit methyltransferase H (159 aa).

S-adenosyl-L-methionine-binding positions include Leu-76, Gly-108, and 127-132; that span reads FSKMTF.

The protein belongs to the RNA methyltransferase RlmH family. As to quaternary structure, homodimer.

The protein localises to the cytoplasm. It catalyses the reaction pseudouridine(1915) in 23S rRNA + S-adenosyl-L-methionine = N(3)-methylpseudouridine(1915) in 23S rRNA + S-adenosyl-L-homocysteine + H(+). Specifically methylates the pseudouridine at position 1915 (m3Psi1915) in 23S rRNA. The protein is Ribosomal RNA large subunit methyltransferase H of Staphylococcus carnosus (strain TM300).